The chain runs to 404 residues: Nicotinate phosphoribosyltransferase (404 aa).

Histidine 225 carries the post-translational modification Phosphohistidine; by autocatalysis.

Belongs to the NAPRTase family. Transiently phosphorylated on a His residue during the reaction cycle. Phosphorylation strongly increases the affinity for substrates and increases the rate of nicotinate D-ribonucleotide production. Dephosphorylation regenerates the low-affinity form of the enzyme, leading to product release.

It carries out the reaction nicotinate + 5-phospho-alpha-D-ribose 1-diphosphate + ATP + H2O = nicotinate beta-D-ribonucleotide + ADP + phosphate + diphosphate. Its pathway is cofactor biosynthesis; NAD(+) biosynthesis; nicotinate D-ribonucleotide from nicotinate: step 1/1. Its function is as follows. Catalyzes the synthesis of beta-nicotinate D-ribonucleotide from nicotinate and 5-phospho-D-ribose 1-phosphate at the expense of ATP. This chain is Nicotinate phosphoribosyltransferase, found in Methanosarcina acetivorans (strain ATCC 35395 / DSM 2834 / JCM 12185 / C2A).